The following is a 142-amino-acid chain: Transcription antitermination protein NusB (142 aa).

This sequence belongs to the NusB family.

Functionally, involved in transcription antitermination. Required for transcription of ribosomal RNA (rRNA) genes. Binds specifically to the boxA antiterminator sequence of the ribosomal RNA (rrn) operons. The polypeptide is Transcription antitermination protein NusB (Streptococcus uberis (strain ATCC BAA-854 / 0140J)).